The primary structure comprises 655 residues: Cyclomaltodextrin glucanotransferase (655 aa).

A signal peptide spans 1–30 (MKRNRFFNTSAAIAISIALNTFFCSMQTIA). Ca(2+) contacts are provided by Asp55, Asn60, Asn61, Gly79, and Asp81. 123–124 (YW) lines the substrate pocket. Asn164 contributes to the Ca(2+) binding site. Substrate is bound by residues His165 and 217-220 (NLFN). Asp223 lines the Ca(2+) pocket. Residue Arg251 participates in substrate binding. The Nucleophile role is filled by Asp253. 256-257 (KH) is a substrate binding site. His257 is a Ca(2+) binding site. Glu287 functions as the Proton donor in the catalytic mechanism. The substrate site is built by His362, Asp436, and Arg440. In terms of domain architecture, CBM20 spans 554–655 (AENPTVQSIN…NDTQTTNGSF (102 aa)). Positions 630 to 655 (TANVEWQSGANNQFNSNDTQTTNGSF) are disordered.

This sequence belongs to the glycosyl hydrolase 13 family. As to quaternary structure, monomer. It depends on Ca(2+) as a cofactor.

The catalysed reaction is Cyclizes part of a (1-&gt;4)-alpha-D-glucan chain by formation of a (1-&gt;4)-alpha-D-glucosidic bond.. The polypeptide is Cyclomaltodextrin glucanotransferase (cgt) (Klebsiella oxytoca).